The following is a 943-amino-acid chain: Leucine--tRNA ligase (943 aa).

The 'HIGH' region motif lies at 40–51; the sequence is PYPSGAGLHVGH. The short motif at 717-721 is the 'KMSKS' region element; that stretch reads KMSKS. Position 720 (lysine 720) interacts with ATP.

This sequence belongs to the class-I aminoacyl-tRNA synthetase family.

It localises to the cytoplasm. It carries out the reaction tRNA(Leu) + L-leucine + ATP = L-leucyl-tRNA(Leu) + AMP + diphosphate. This is Leucine--tRNA ligase from Bacteroides fragilis (strain YCH46).